A 1395-amino-acid chain; its full sequence is DNA-directed RNA polymerase subunit beta' (1395 aa).

Residues Cys-70, Cys-72, Cys-85, and Cys-88 each contribute to the Zn(2+) site. Mg(2+) is bound by residues Asp-470, Asp-472, and Asp-474. The Zn(2+) site is built by Cys-815, Cys-889, Cys-896, and Cys-899.

Belongs to the RNA polymerase beta' chain family. As to quaternary structure, the RNAP catalytic core consists of 2 alpha, 1 beta, 1 beta' and 1 omega subunit. When a sigma factor is associated with the core the holoenzyme is formed, which can initiate transcription. It depends on Mg(2+) as a cofactor. Requires Zn(2+) as cofactor.

The enzyme catalyses RNA(n) + a ribonucleoside 5'-triphosphate = RNA(n+1) + diphosphate. DNA-dependent RNA polymerase catalyzes the transcription of DNA into RNA using the four ribonucleoside triphosphates as substrates. The sequence is that of DNA-directed RNA polymerase subunit beta' from Anaeromyxobacter sp. (strain Fw109-5).